We begin with the raw amino-acid sequence, 173 residues long: Large ribosomal subunit protein uL16 (173 aa).

This sequence belongs to the universal ribosomal protein uL16 family.

The protein is Large ribosomal subunit protein uL16 of Methanococcus maripaludis (strain C6 / ATCC BAA-1332).